The chain runs to 152 residues: Protein SprT-like (152 aa).

Residues 7–148 (QRLVEEVSLQ…GKCKGKLNLI (142 aa)) enclose the SprT-like domain. H67 is a binding site for Zn(2+). E68 is an active-site residue. Position 71 (H71) interacts with Zn(2+).

Belongs to the SprT family. Requires Zn(2+) as cofactor.

Its subcellular location is the cytoplasm. In Bacillus cereus (strain 03BB102), this protein is Protein SprT-like.